The primary structure comprises 336 residues: uncharacterized protein (336 aa).

The protein to bacterial alkanal monooxygenase alpha and beta chains.

This is an uncharacterized protein from Bacillus subtilis (strain 168).